A 130-amino-acid polypeptide reads, in one-letter code: Large ribosomal subunit protein bL19c (130 aa).

Belongs to the bacterial ribosomal protein bL19 family.

It localises to the plastid. The protein localises to the chloroplast. This chain is Large ribosomal subunit protein bL19c (rpl19), found in Chlorella vulgaris (Green alga).